Here is a 317-residue protein sequence, read N- to C-terminus: Beta-ketoacyl-[acyl-carrier-protein] synthase III (317 aa).

Catalysis depends on residues Cys-112 and His-244. Residues Gln-245–Arg-249 form an ACP-binding region. The active site involves Asn-274.

This sequence belongs to the thiolase-like superfamily. FabH family. In terms of assembly, homodimer.

Its subcellular location is the cytoplasm. It catalyses the reaction malonyl-[ACP] + acetyl-CoA + H(+) = 3-oxobutanoyl-[ACP] + CO2 + CoA. Its pathway is lipid metabolism; fatty acid biosynthesis. In terms of biological role, catalyzes the condensation reaction of fatty acid synthesis by the addition to an acyl acceptor of two carbons from malonyl-ACP. Catalyzes the first condensation reaction which initiates fatty acid synthesis and may therefore play a role in governing the total rate of fatty acid production. Possesses both acetoacetyl-ACP synthase and acetyl transacylase activities. Its substrate specificity determines the biosynthesis of branched-chain and/or straight-chain of fatty acids. The protein is Beta-ketoacyl-[acyl-carrier-protein] synthase III of Serratia proteamaculans (strain 568).